The following is a 20-amino-acid chain: Large ribosomal subunit protein bL31 (20 aa).

Residues Xaa16 and Xaa18 each coordinate Zn(2+).

This sequence belongs to the bacterial ribosomal protein bL31 family. Type A subfamily. In terms of assembly, part of the 50S ribosomal subunit. Requires Zn(2+) as cofactor.

Its function is as follows. Binds the 23S rRNA. This chain is Large ribosomal subunit protein bL31 (rpmE), found in Ectopseudomonas mendocina (Pseudomonas mendocina).